Reading from the N-terminus, the 255-residue chain is Hydroxyacylglutathione hydrolase (255 aa).

The Zn(2+) site is built by His-56, His-58, Asp-60, His-61, His-112, Asp-129, and His-167.

The protein belongs to the metallo-beta-lactamase superfamily. Glyoxalase II family. In terms of assembly, monomer. It depends on Zn(2+) as a cofactor.

It carries out the reaction an S-(2-hydroxyacyl)glutathione + H2O = a 2-hydroxy carboxylate + glutathione + H(+). It participates in secondary metabolite metabolism; methylglyoxal degradation; (R)-lactate from methylglyoxal: step 2/2. In terms of biological role, thiolesterase that catalyzes the hydrolysis of S-D-lactoyl-glutathione to form glutathione and D-lactic acid. The polypeptide is Hydroxyacylglutathione hydrolase (Pseudomonas fluorescens (strain SBW25)).